We begin with the raw amino-acid sequence, 538 residues long: MAVSSKHIPAPDLHRVRRALLSVSDKTGLIDFAKALHANGVEILSTGGTAKSIAAAGIPVKDVSEITGFPEIMDGRVKTLHPAVHGGLLAVRNDPEHVAAIEEHGIGGIDLAVINLYPFEEVRFKGGDYDTTVENIDIGGPAMIRASAKNHAYVATVVDPADYADVVAELEKHSGSLPLAFRKKLAAKAFSRTAAYDAAISNWFAEAIDEETPTYRAVAGKLHSVMRYGENPHQTAGFYLTGEKRPGVATATQLQGKQLSYNNINDTDAAFELVAEFDPARTAAVAIIKHANPCGVAEASTIKEAYLKALACDPVSAFGGIVALNRTLDEEAAEEIVKTFTEVIIAPDATEGAQAIVAAKKNLRLLVTGGLPDPRAKGIAAKTVAGGLLVQSRDNGVVDDLDLKVVTKRAPTEAELNDLKFAFRVGKHVKSNAIVYVKDGATVGIGAGQMSRVDSARIAARKAEDAAEAAGLAAPLTKGCVVASDAFFPFADGLLSAVEAGATAVIQPGGSMRDDEVIAAADEHGIAMVMTGMRHFRH.

Positions 6 to 158 (KHIPAPDLHR…KNHAYVATVV (153 aa)) constitute an MGS-like domain.

The protein belongs to the PurH family.

The enzyme catalyses (6R)-10-formyltetrahydrofolate + 5-amino-1-(5-phospho-beta-D-ribosyl)imidazole-4-carboxamide = 5-formamido-1-(5-phospho-D-ribosyl)imidazole-4-carboxamide + (6S)-5,6,7,8-tetrahydrofolate. The catalysed reaction is IMP + H2O = 5-formamido-1-(5-phospho-D-ribosyl)imidazole-4-carboxamide. Its pathway is purine metabolism; IMP biosynthesis via de novo pathway; 5-formamido-1-(5-phospho-D-ribosyl)imidazole-4-carboxamide from 5-amino-1-(5-phospho-D-ribosyl)imidazole-4-carboxamide (10-formyl THF route): step 1/1. The protein operates within purine metabolism; IMP biosynthesis via de novo pathway; IMP from 5-formamido-1-(5-phospho-D-ribosyl)imidazole-4-carboxamide: step 1/1. This Brucella ovis (strain ATCC 25840 / 63/290 / NCTC 10512) protein is Bifunctional purine biosynthesis protein PurH.